The primary structure comprises 523 residues: Transcription factor MYB120 (523 aa).

HTH myb-type domains follow at residues 23-75 and 76-130; these read GVIL…ANHL and RPNL…KRLL. 2 consecutive DNA-binding regions (H-T-H motif) follow at residues 51–75 and 103–126; these read WNAV…ANHL and WARM…NTRL. Disordered stretches follow at residues 140–254, 332–373, 396–426, and 444–470; these read DIIP…YPTL, QTAT…SHYT, QIPQ…GAHR, and LASG…NNTN. Positions 147-167 are enriched in basic residues; that stretch reads LHPHPHHQQQQQHNHHHHHHQ. Residues 175–185 are compositionally biased toward polar residues; it reads MYFQPQSSQRN. Composition is skewed to low complexity over residues 202–212, 223–232, and 341–368; these read SSSSFTFHTTT, TPNTPSQLSS, and NPYS…PSFL. Positions 396-410 are enriched in polar residues; sequence QIPQIDGFNNVNNFT.

Expressed in pollen grains and pollen tube. Mostly expressed in mature pollen grains, and, to a lower extent, in inflorescences and siliques.

It localises to the nucleus. In terms of biological role, transcription activator. Binds to 5'-CAACTGTC-3' and/or 5'-TAACAAA-3' motif in target gene promoter to promote their expression. Together with MYB97 and MYB101, functions as a male factor that controls pollen tube-synergid interaction in fertilization. Required for pollen tube growth arrest and sperm cell release in the female gametophyte, probably via the regulation of pollen tube-specific gene expression. In Arabidopsis thaliana (Mouse-ear cress), this protein is Transcription factor MYB120.